The following is a 1183-amino-acid chain: DNA-directed RNA polymerase subunit beta (1183 aa).

A disordered region spans residues 1155-1183 (ADVDEDDVNEHKVNIQQSSIPESQKETTD).

The protein belongs to the RNA polymerase beta chain family. In terms of assembly, the RNAP catalytic core consists of 2 alpha, 1 beta, 1 beta' and 1 omega subunit. When a sigma factor is associated with the core the holoenzyme is formed, which can initiate transcription.

It carries out the reaction RNA(n) + a ribonucleoside 5'-triphosphate = RNA(n+1) + diphosphate. DNA-dependent RNA polymerase catalyzes the transcription of DNA into RNA using the four ribonucleoside triphosphates as substrates. In Staphylococcus carnosus (strain TM300), this protein is DNA-directed RNA polymerase subunit beta.